The primary structure comprises 346 residues: S-adenosylmethionine:tRNA ribosyltransferase-isomerase (346 aa).

The protein belongs to the QueA family. As to quaternary structure, monomer.

It is found in the cytoplasm. It carries out the reaction 7-aminomethyl-7-carbaguanosine(34) in tRNA + S-adenosyl-L-methionine = epoxyqueuosine(34) in tRNA + adenine + L-methionine + 2 H(+). It participates in tRNA modification; tRNA-queuosine biosynthesis. Transfers and isomerizes the ribose moiety from AdoMet to the 7-aminomethyl group of 7-deazaguanine (preQ1-tRNA) to give epoxyqueuosine (oQ-tRNA). The polypeptide is S-adenosylmethionine:tRNA ribosyltransferase-isomerase (Chloroherpeton thalassium (strain ATCC 35110 / GB-78)).